The chain runs to 830 residues: Probable glucan 1,3-beta-glucosidase D (830 aa).

The segment covering Met-1–His-34 has biased composition (basic and acidic residues). Residues Met-1–Gly-279 form a disordered region. Residues Met-1 to Trp-301 lie on the Cytoplasmic side of the membrane. A compositionally biased stretch (acidic residues) spans Asp-35–Asp-51. Composition is skewed to basic and acidic residues over residues Val-52–Arg-98 and Gln-110–Ser-175. Residues Ser-181–Leu-194 are compositionally biased toward low complexity. 3 stretches are compositionally biased toward basic and acidic residues: residues Tyr-198 to Ala-215, Glu-228 to Arg-243, and Glu-253 to Arg-264. Residues Leu-302–Val-322 traverse the membrane as a helical; Signal-anchor for type II membrane protein segment. The Extracellular portion of the chain corresponds to Ser-323–Tyr-830. The disordered stretch occupies residues Asn-327–Ser-351. Residues Pro-330 to Asp-348 show a composition bias toward polar residues. Residues Asn-331, Asn-376, Asn-381, Asn-393, Asn-546, and Asn-558 are each glycosylated (N-linked (GlcNAc...) asparagine). The active-site Proton donor is the Glu-597. N-linked (GlcNAc...) asparagine glycans are attached at residues Asn-610, Asn-636, Asn-669, and Asn-689. The active-site Nucleophile is Glu-701.

This sequence belongs to the glycosyl hydrolase 5 (cellulase A) family.

The protein localises to the cell membrane. The enzyme catalyses Successive hydrolysis of beta-D-glucose units from the non-reducing ends of (1-&gt;3)-beta-D-glucans, releasing alpha-glucose.. In terms of biological role, glucosidase involved in the degradation of cellulosic biomass. Active on lichenan. The sequence is that of Probable glucan 1,3-beta-glucosidase D (exgD) from Aspergillus clavatus (strain ATCC 1007 / CBS 513.65 / DSM 816 / NCTC 3887 / NRRL 1 / QM 1276 / 107).